The primary structure comprises 158 residues: Regulator of sigma D (158 aa).

It belongs to the Rsd/AlgQ family. As to quaternary structure, interacts with RpoD.

The protein resides in the cytoplasm. Binds RpoD and negatively regulates RpoD-mediated transcription activation by preventing the interaction between the primary sigma factor RpoD with the catalytic core of the RNA polymerase and with promoter DNA. May be involved in replacement of the RNA polymerase sigma subunit from RpoD to RpoS during the transition from exponential growth to the stationary phase. This is Regulator of sigma D from Escherichia coli (strain UTI89 / UPEC).